The sequence spans 1441 residues: uncharacterized protein (1441 aa).

Disordered regions lie at residues 1-95, 150-204, 224-289, 401-477, 529-661, 680-760, 776-810, 849-899, 980-1118, 1161-1185, 1209-1321, 1348-1402, and 1421-1441; these read MGFL…EVIS, NGGI…QQQF, KPHQ…GEGE, HSNG…QLHQ, RHES…QPQQ, LNKD…KSQT, RKSSDSLNSSNSNIPITNISPGRQSQQQQQQHIQQ, QQQF…TQQL, RGGS…DNNN, KSLKNSFNNNNNENINNNNNENENN, NIES…YRSY, GHNS…HIFF, and LKFNQQNNSNNNDDLGGSILE. Residues 19–38 are compositionally biased toward low complexity; the sequence is NDNSFDGGSSSYNNNNNNNN. Positions 39-56 are enriched in polar residues; it reads QPITYTPTAIRSPNNKTM. Low complexity-rich tracts occupy residues 57–91, 153–187, 227–283, 416–445, 555–564, and 572–635; these read SQSQTSIPTLSSSPSLNYPSSPPNNNNNNNNGNGN, ISQPTTPISSPSQPFQSVQPNLIIPTTPTTTTTTP, QQQQ…SLQN, NNNNNNNNNNNNNNGNNSNNGNINNNGINN, GNTDGVNIDN, and NNNN…TNNT. The span at 636–645 shows a compositional bias: polar residues; it reads ATPSVINGDS. Composition is skewed to low complexity over residues 648–661 and 680–700; these read QEQPQQSQQQQPQQ and LNKDSNNVDNNNNNNNIDDNN. The span at 703 to 720 shows a compositional bias: basic and acidic residues; the sequence is SREEMENILKKSQQDSNK. Residues 729 to 751 are compositionally biased toward polar residues; sequence EDSNSGSPTFQDFQSSAAASNVS. Low complexity-rich tracts occupy residues 780-810 and 849-880; these read DSLNSSNSNIPITNISPGRQSQQQQQQHIQQ and QQQFQFQQNSVSSQSLQSLNGGNNNNNSNSGS. Gly residues predominate over residues 881 to 892; it reads INGGSNSGGGGV. Polar residues predominate over residues 981–994; sequence GGSTNRTTPPFLTP. The span at 995–1067 shows a compositional bias: low complexity; that stretch reads NTSQTNLSSL…NKQTANNTTN (73 aa). The segment covering 1068-1087 has biased composition (polar residues); sequence DFSFDQNTDLRSSTNSLTIG. Residues 1088–1118 are compositionally biased toward low complexity; it reads SNSNFSSLKNSLNLENPENNNNPDKNVDNNN. Composition is skewed to low complexity over residues 1225–1249 and 1257–1291; these read DNNNSSSNNNNNNLKNSNSNNSLRN and NISNNNNNNNNNNNNNNNNNNNNNNNNNNNNNNNE. Residues 1362 to 1373 are compositionally biased toward basic and acidic residues; the sequence is RHKDSIGDKEMD.

This is an uncharacterized protein from Dictyostelium discoideum (Social amoeba).